The primary structure comprises 234 residues: Ribonuclease Trv (234 aa).

5 disulfide bridges follow: Cys-5–Cys-24, Cys-13–Cys-59, Cys-23–Cys-125, Cys-67–Cys-117, and Cys-189–Cys-224. A glycan (N-linked (GlcNAc...) asparagine) is linked at Asn-15. His-52 is an active-site residue. Asn-75 is a glycosylation site (N-linked (GlcNAc...) asparagine). Active-site residues include Glu-110 and His-114.

It belongs to the RNase T2 family.

It carries out the reaction a ribonucleotidyl-ribonucleotide-RNA + H2O = a 3'-end 3'-phospho-ribonucleotide-RNA + a 5'-end dephospho-ribonucleoside-RNA + H(+). This is a base non-specific and adenylic acid preferential ribonuclease. The chain is Ribonuclease Trv from Hypocrea rufa (Trichoderma viride).